The following is a 195-amino-acid chain: Nicotinamide riboside kinase 1 (195 aa).

Position 10-18 (10-18) interacts with ATP; sequence GVTNGGKTT. Positions 17 and 36 each coordinate Mg(2+). Residue Asp-36 is the Proton acceptor of the active site. Substrate contacts are provided by residues 36–39 and 55–56; these read DDFF and YD. Arg-128 contacts ATP. Residues Arg-129 and 134-135 each bind substrate; that span reads YE. ATP is bound by residues 132–134 and 172–174; these read RVY and RSE.

This sequence belongs to the uridine kinase family. NRK subfamily. Monomer.

It catalyses the reaction beta-nicotinamide D-riboside + ATP = beta-nicotinamide D-ribonucleotide + ADP + H(+). The enzyme catalyses beta-D-ribosylnicotinate + ATP = nicotinate beta-D-ribonucleotide + ADP + H(+). It functions in the pathway cofactor biosynthesis; NAD(+) biosynthesis. Functionally, catalyzes the phosphorylation of nicotinamide riboside (NR) and nicotinic acid riboside (NaR) to form nicotinamide mononucleotide (NMN) and nicotinic acid mononucleotide (NaMN). This is Nicotinamide riboside kinase 1 (Nmrk1) from Mus musculus (Mouse).